The primary structure comprises 336 residues: Holliday junction branch migration complex subunit RuvB (336 aa).

The tract at residues Met-1–Tyr-184 is large ATPase domain (RuvB-L). ATP-binding positions include Leu-23, Arg-24, Gly-65, Lys-68, Thr-69, Thr-70, Glu-131 to Tyr-133, Arg-174, Tyr-184, and Arg-221. Residue Thr-69 coordinates Mg(2+). The interval Asn-185–Arg-255 is small ATPAse domain (RuvB-S). The head domain (RuvB-H) stretch occupies residues Lys-258 to Gly-336. The DNA site is built by Arg-313 and Arg-318.

It belongs to the RuvB family. Homohexamer. Forms an RuvA(8)-RuvB(12)-Holliday junction (HJ) complex. HJ DNA is sandwiched between 2 RuvA tetramers; dsDNA enters through RuvA and exits via RuvB. An RuvB hexamer assembles on each DNA strand where it exits the tetramer. Each RuvB hexamer is contacted by two RuvA subunits (via domain III) on 2 adjacent RuvB subunits; this complex drives branch migration. In the full resolvosome a probable DNA-RuvA(4)-RuvB(12)-RuvC(2) complex forms which resolves the HJ.

Its subcellular location is the cytoplasm. The catalysed reaction is ATP + H2O = ADP + phosphate + H(+). The RuvA-RuvB-RuvC complex processes Holliday junction (HJ) DNA during genetic recombination and DNA repair, while the RuvA-RuvB complex plays an important role in the rescue of blocked DNA replication forks via replication fork reversal (RFR). RuvA specifically binds to HJ cruciform DNA, conferring on it an open structure. The RuvB hexamer acts as an ATP-dependent pump, pulling dsDNA into and through the RuvAB complex. RuvB forms 2 homohexamers on either side of HJ DNA bound by 1 or 2 RuvA tetramers; 4 subunits per hexamer contact DNA at a time. Coordinated motions by a converter formed by DNA-disengaged RuvB subunits stimulates ATP hydrolysis and nucleotide exchange. Immobilization of the converter enables RuvB to convert the ATP-contained energy into a lever motion, pulling 2 nucleotides of DNA out of the RuvA tetramer per ATP hydrolyzed, thus driving DNA branch migration. The RuvB motors rotate together with the DNA substrate, which together with the progressing nucleotide cycle form the mechanistic basis for DNA recombination by continuous HJ branch migration. Branch migration allows RuvC to scan DNA until it finds its consensus sequence, where it cleaves and resolves cruciform DNA. The protein is Holliday junction branch migration complex subunit RuvB of Ligilactobacillus salivarius (strain UCC118) (Lactobacillus salivarius).